A 244-amino-acid polypeptide reads, in one-letter code: Protein IN2-1 homolog B (244 aa).

Residues 1-27 are disordered; sequence MAAAAAAPASSEKEVLPPSLTSSSEPP. The GST N-terminal domain maps to 32–113; the sequence is GTTRLYVAYH…YIDTNFEGPA (82 aa). Residues Val85 and 97–98 each bind glutathione; that span reads ES. A GST C-terminal domain is found at 118–241; it reads DSEKQQFAEE…FLLEHTKKRL (124 aa).

In Oryza sativa subsp. indica (Rice), this protein is Protein IN2-1 homolog B (GSTZ5).